The primary structure comprises 257 residues: Protein YIPF5 (257 aa).

The Cytoplasmic segment spans residues 1–124; that stretch reads MSGFENLNTD…KVADGSIMNE (124 aa). The interaction with Sec23 stretch occupies residues 75 to 106; that stretch reads PASPQPFYGNSFEDEPPLLEELGINFDHIWQK. Residues 125 to 145 traverse the membrane as a helical segment; it reads TDLAGPMVFCLAFGATLLLAG. Residue K146 is a topological domain, lumenal. A helical membrane pass occupies residues 147 to 167; the sequence is IQFGYVYGISAIGCLGMFCLL. At 168-173 the chain is on the cytoplasmic side; that stretch reads NLMSMT. Residues 174–194 traverse the membrane as a helical segment; that stretch reads GVSFGCVASVLGYCLLPMILL. Topologically, residues 195-196 are lumenal; sequence SS. A helical membrane pass occupies residues 197–217; the sequence is FAVIFSLQGMVGIILTAGIIG. Over 218–236 the chain is Cytoplasmic; that stretch reads WCSFSASKIFISALAMEGQ. Residues 237–257 traverse the membrane as a helical segment; it reads QLLVAYPCALLYGVFALISVF.

The protein belongs to the YIP1 family. As to quaternary structure, interacts with the COPII coat components Sec23 (SEC23A and/or SEC23B) and Sec24 (SEC24A and/or SEC24B). Interacts with YIF1A. May interact with RAB1A. Interacts with YIPF3 and YIPF4.

It localises to the endoplasmic reticulum membrane. It is found in the golgi apparatus. Its subcellular location is the cis-Golgi network membrane. The protein localises to the cytoplasmic vesicle. The protein resides in the COPII-coated vesicle. Its function is as follows. Plays a role in transport between endoplasmic reticulum and Golgi. In pancreatic beta cells, required to transport proinsulin from endoplasmic reticulum into the Golgi. This Macaca fascicularis (Crab-eating macaque) protein is Protein YIPF5 (YIPF5).